A 118-amino-acid polypeptide reads, in one-letter code: Large ribosomal subunit protein bL20 (118 aa).

It belongs to the bacterial ribosomal protein bL20 family.

Its function is as follows. Binds directly to 23S ribosomal RNA and is necessary for the in vitro assembly process of the 50S ribosomal subunit. It is not involved in the protein synthesizing functions of that subunit. This is Large ribosomal subunit protein bL20 from Ralstonia pickettii (strain 12J).